We begin with the raw amino-acid sequence, 318 residues long: Transaldolase (318 aa).

Catalysis depends on K132, which acts as the Schiff-base intermediate with substrate.

This sequence belongs to the transaldolase family. Type 1 subfamily. As to quaternary structure, homodimer.

It localises to the cytoplasm. It carries out the reaction D-sedoheptulose 7-phosphate + D-glyceraldehyde 3-phosphate = D-erythrose 4-phosphate + beta-D-fructose 6-phosphate. Its pathway is carbohydrate degradation; pentose phosphate pathway; D-glyceraldehyde 3-phosphate and beta-D-fructose 6-phosphate from D-ribose 5-phosphate and D-xylulose 5-phosphate (non-oxidative stage): step 2/3. In terms of biological role, transaldolase is important for the balance of metabolites in the pentose-phosphate pathway. In Shewanella sp. (strain MR-4), this protein is Transaldolase.